The sequence spans 182 residues: Nucleoside triphosphate/diphosphate phosphatase (182 aa).

The Proton donor role is filled by Arg-27. Residues Asn-91, Asp-107, Asp-109, Asp-111, Asp-124, and Glu-127 each coordinate Mg(2+).

The protein belongs to the Ntdp family. Mg(2+) is required as a cofactor.

The catalysed reaction is a ribonucleoside 5'-triphosphate + H2O = a ribonucleoside 5'-diphosphate + phosphate + H(+). It catalyses the reaction a ribonucleoside 5'-diphosphate + H2O = a ribonucleoside 5'-phosphate + phosphate + H(+). Has nucleoside phosphatase activity towards nucleoside triphosphates and nucleoside diphosphates. In Lactiplantibacillus plantarum (strain ATCC BAA-793 / NCIMB 8826 / WCFS1) (Lactobacillus plantarum), this protein is Nucleoside triphosphate/diphosphate phosphatase.